Consider the following 373-residue polypeptide: 4-hydroxy-3-methylbut-2-en-1-yl diphosphate synthase (flavodoxin) (373 aa).

Positions 270, 273, 305, and 312 each coordinate [4Fe-4S] cluster.

It belongs to the IspG family. It depends on [4Fe-4S] cluster as a cofactor.

It carries out the reaction (2E)-4-hydroxy-3-methylbut-2-enyl diphosphate + oxidized [flavodoxin] + H2O + 2 H(+) = 2-C-methyl-D-erythritol 2,4-cyclic diphosphate + reduced [flavodoxin]. Its pathway is isoprenoid biosynthesis; isopentenyl diphosphate biosynthesis via DXP pathway; isopentenyl diphosphate from 1-deoxy-D-xylulose 5-phosphate: step 5/6. Functionally, converts 2C-methyl-D-erythritol 2,4-cyclodiphosphate (ME-2,4cPP) into 1-hydroxy-2-methyl-2-(E)-butenyl 4-diphosphate. The sequence is that of 4-hydroxy-3-methylbut-2-en-1-yl diphosphate synthase (flavodoxin) from Proteus mirabilis (strain HI4320).